Here is a 616-residue protein sequence, read N- to C-terminus: Glucoamylase P (616 aa).

Residues methionine 1–arginine 29 form the signal peptide. A substrate-binding site is contributed by tryptophan 149. N-linked (GlcNAc...) asparagine glycosylation occurs at asparagine 200. Aspartate 205 functions as the Proton acceptor in the catalytic mechanism. The active-site Proton donor is glutamate 208. Residue asparagine 427 is glycosylated (N-linked (GlcNAc...) asparagine). One can recognise a CBM20 domain in the interval valine 501–glycine 608.

This sequence belongs to the glycosyl hydrolase 15 family.

It is found in the secreted. It catalyses the reaction Hydrolysis of terminal (1-&gt;4)-linked alpha-D-glucose residues successively from non-reducing ends of the chains with release of beta-D-glucose.. The polypeptide is Glucoamylase P (GAMP) (Amorphotheca resinae (Creosote fungus)).